The sequence spans 316 residues: Methionyl-tRNA formyltransferase (316 aa).

113 to 116 (SLLP) contributes to the (6S)-5,6,7,8-tetrahydrofolate binding site.

This sequence belongs to the Fmt family.

It carries out the reaction L-methionyl-tRNA(fMet) + (6R)-10-formyltetrahydrofolate = N-formyl-L-methionyl-tRNA(fMet) + (6S)-5,6,7,8-tetrahydrofolate + H(+). In terms of biological role, attaches a formyl group to the free amino group of methionyl-tRNA(fMet). The formyl group appears to play a dual role in the initiator identity of N-formylmethionyl-tRNA by promoting its recognition by IF2 and preventing the misappropriation of this tRNA by the elongation apparatus. The sequence is that of Methionyl-tRNA formyltransferase from Proteus mirabilis (strain HI4320).